The following is a 111-amino-acid chain: Anti-adapter protein IraM (111 aa).

The protein belongs to the IraM/RssC family.

It localises to the cytoplasm. In terms of biological role, inhibits RpoS proteolysis by regulating RssB activity, thereby increasing the stability of the sigma stress factor RpoS during magnesium starvation. The chain is Anti-adapter protein IraM from Escherichia coli O127:H6 (strain E2348/69 / EPEC).